Here is a 1497-residue protein sequence, read N- to C-terminus: Collagen alpha-1(XVII) chain (1497 aa).

Disordered stretches follow at residues 1-154 and 167-186; these read MDVT…PSTR and GSRS…LPIP. Residues 1–467 are Cytoplasmic-facing; the sequence is MDVTKKNKRD…CGSCCSWWKW (467 aa). The nonhelical region (NC16) stretch occupies residues 1–566; sequence MDVTKKNKRD…MMEQENGNLR (566 aa). A compositionally biased stretch (basic and acidic residues) spans 9 to 19; it reads RDGTEVTERIV. Polar residues-rich tracts occupy residues 57 to 96 and 169 to 183; these read LTHG…SPGS and RSAS…SNTL. Residues 145-230 are necessary for interaction with DST and for the recruitment of DST to hemidesmosome; sequence RLQSASPSTR…WSSTLPAGSS (86 aa). Residues 468–488 traverse the membrane as a helical; Signal-anchor for type II membrane protein segment; it reads LLGLLLTWLLLLGLLFGLIAL. Residues 489 to 1497 are Extracellular-facing; the sequence is AEEVRKLKAR…RRRRSIAVKP (1009 aa). Residue Ser544 is modified to Phosphoserine; by CK2. 3 disordered regions span residues 562 to 1011, 1209 to 1234, and 1261 to 1316; these read NGNL…SSSG, GLSF…VSGA, and SFIV…TGGG. The segment at 567-1482 is triple-helical region; that stretch reads GSPGPKGDMG…KGEKGDKGDQ (916 aa). The segment covering 590 to 602 has biased composition (pro residues); the sequence is PGIPGPLGHPGPQ. 4 stretches are compositionally biased toward low complexity: residues 604 to 635, 661 to 673, 735 to 748, and 774 to 796; these read PKGQ…RGEA, PGSV…SGSP, EPGA…AGPD, and DPGK…PGRP. Composition is skewed to pro residues over residues 820-841, 858-881, and 907-916; these read PGPP…PGPA, PPGP…PRGP, and PPGPPGPPGP. Composition is skewed to low complexity over residues 936-946 and 968-987; these read GFSTSGSSSFG and PGVP…GSSS. 3 stretches are compositionally biased toward pro residues: residues 994–1004, 1214–1228, and 1266–1275; these read PPGPPGPPGPP, PGPP…PRGP, and PPGPPGPQGP. Low complexity predominate over residues 1289–1312; that stretch reads SRGSSSSSHSSSVRRGSSYSSSMS. Asn1421 carries an N-linked (GlcNAc...) asparagine glycan. Positions 1434 to 1497 are disordered; sequence GAIQGPPGQK…RRRRSIAVKP (64 aa). A compositionally biased stretch (pro residues) spans 1458–1469; the sequence is AGPPGHPGPPGP. Residues 1472–1481 are compositionally biased toward basic and acidic residues; the sequence is HKGEKGDKGD. Positions 1483–1497 are nonhelical region (NC1); sequence VYAGRRRRRSIAVKP. A compositionally biased stretch (basic residues) spans 1486–1497; it reads GRRRRRSIAVKP.

Homotrimers of alpha 1(XVII)chains. Interacts (via cytoplasmic region) with ITGB4 (via cytoplasmic region). Interacts (via cytoplasmic region) with DST isoform 3 (via N-terminus). Interacts (via N-terminus) with PLEC. Interacts (via cytoplasmic region) with DSP. In terms of processing, the intracellular/endo domain is disulfide-linked. Prolines at the third position of the tripeptide repeating unit (G-X-Y) are hydroxylated in some or all of the chains. Post-translationally, the ectodomain is shedded from the surface of keratinocytes resulting in a 120-kDa soluble form, also named as 120 kDa linear IgA disease antigen. The shedding is mediated by membrane-bound metalloproteases. This cleavage is inhibited by phosphorylation at Ser-544. As to expression, detected in skin. In the cornea, it is detected in the epithelial basement membrane, the epithelial cells, and at a lower level in stromal cells (at protein level). Stratified squamous epithelia. Found in hemidesmosomes. Expressed in cornea, oral mucosa, esophagus, intestine, kidney collecting ducts, ureter, bladder, urethra and thymus but is absent in lung, blood vessels, skeletal muscle and nerves.

The protein resides in the cell junction. It is found in the hemidesmosome. The protein localises to the membrane. It localises to the secreted. Its subcellular location is the extracellular space. The protein resides in the extracellular matrix. It is found in the basement membrane. Functionally, may play a role in the integrity of hemidesmosome and the attachment of basal keratinocytes to the underlying basement membrane. Its function is as follows. The 120 kDa linear IgA disease antigen is an anchoring filament component involved in dermal-epidermal cohesion. Is the target of linear IgA bullous dermatosis autoantibodies. The protein is Collagen alpha-1(XVII) chain (COL17A1) of Homo sapiens (Human).